The following is a 292-amino-acid chain: MFEIIFIGVGGGAPNKRGLPGILIRREGFEILLDCGEGTQNKMIEHSISFMKLNLIGISHLHGDHVLGLPGIIQTMAMYSRQQKLLLMGPTTLQDYLKSSSKHTYFKPGFETEFIQSYEDQNLTITTFRTCHTIESYGFLIKEKDKTKVDAERLKKEGITDWRIIRKLKEGKRVEIDTKVFLPEDYLYVKKGLSIAYTGDTAPCDSVLNAIKGVDLLIHDSTFLNEREAHDYGHSNCTDAAEIASKADVKRLALYHISGRYQTTEPLLKEAKKIFERTFLPEPLSYFILQEE.

Zn(2+)-binding residues include His60, His62, Asp64, His65, His132, Asp200, and His256. Asp64 (proton acceptor) is an active-site residue.

It belongs to the RNase Z family. Homodimer. Requires Zn(2+) as cofactor.

It catalyses the reaction Endonucleolytic cleavage of RNA, removing extra 3' nucleotides from tRNA precursor, generating 3' termini of tRNAs. A 3'-hydroxy group is left at the tRNA terminus and a 5'-phosphoryl group is left at the trailer molecule.. Its function is as follows. Zinc phosphodiesterase, which displays some tRNA 3'-processing endonuclease activity. Probably involved in tRNA maturation, by removing a 3'-trailer from precursor tRNA. The polypeptide is Ribonuclease Z (Sulfolobus acidocaldarius (strain ATCC 33909 / DSM 639 / JCM 8929 / NBRC 15157 / NCIMB 11770)).